Here is a 218-residue protein sequence, read N- to C-terminus: Putative tRNA methyltransferase MG248 (218 aa).

It belongs to the TrmK family.

It localises to the cytoplasm. This is Putative tRNA methyltransferase MG248 from Mycoplasma genitalium (strain ATCC 33530 / DSM 19775 / NCTC 10195 / G37) (Mycoplasmoides genitalium).